We begin with the raw amino-acid sequence, 157 residues long: SUMO-conjugating enzyme UBC9-B (157 aa).

The region spanning 4 to 157 (IALSRLAQER…VRAQAKKFSP (154 aa)) is the UBC core domain. The tract at residues 13–18 (RKAWRK) is interaction with SUMO1. Cysteine 93 functions as the Glycyl thioester intermediate in the catalytic mechanism.

It belongs to the ubiquitin-conjugating enzyme family. In terms of assembly, forms a tight complex with rangap1 and ranbp2. Interacts with vsx1.

The protein localises to the nucleus. The protein operates within protein modification; protein sumoylation. In terms of biological role, accepts the ubiquitin-like proteins sumo1, sumo2 and sumo3 from the uble1a-uble1b E1 complex and catalyzes their covalent attachment to other proteins with the help of an E3 ligase such as ranbp2 or cbx4. Essential for nuclear architecture and chromosome segregation. Mediates nuclear localization of vsx1. Required for progression through mitosis during organogenesis. The protein is SUMO-conjugating enzyme UBC9-B (ube2ib) of Danio rerio (Zebrafish).